Here is a 23-residue protein sequence, read N- to C-terminus: NADP phosphatase 2 (23 aa).

In terms of assembly, homodimer.

Its subcellular location is the cytoplasm. This is NADP phosphatase 2 from Arthrobacter sp. (strain KM).